The primary structure comprises 223 residues: Triosephosphate isomerase (223 aa).

6–8 provides a ligand contact to substrate; sequence NLK. Histidine 86 serves as the catalytic Electrophile. Catalysis depends on glutamate 151, which acts as the Proton acceptor. Positions 157 and 187 each coordinate substrate.

It belongs to the triosephosphate isomerase family. In terms of assembly, homodimer.

It is found in the cytoplasm. It carries out the reaction D-glyceraldehyde 3-phosphate = dihydroxyacetone phosphate. It functions in the pathway carbohydrate biosynthesis; gluconeogenesis. Its pathway is carbohydrate degradation; glycolysis; D-glyceraldehyde 3-phosphate from glycerone phosphate: step 1/1. Functionally, involved in the gluconeogenesis. Catalyzes stereospecifically the conversion of dihydroxyacetone phosphate (DHAP) to D-glyceraldehyde-3-phosphate (G3P). This chain is Triosephosphate isomerase, found in Campylobacter jejuni subsp. doylei (strain ATCC BAA-1458 / RM4099 / 269.97).